Here is a 210-residue protein sequence, read N- to C-terminus: Phosphoheptose isomerase (210 aa).

Residues 38–202 (IAACLARGGK…ENVAALAPYL (165 aa)) form the SIS domain. Residue 53 to 55 (NGG) participates in substrate binding. Positions 62 and 66 each coordinate Zn(2+). Residues glutamate 66, 95–96 (ND), 121–123 (STS), serine 126, and glutamine 173 contribute to the substrate site. Zn(2+)-binding residues include glutamine 173 and histidine 181.

This sequence belongs to the SIS family. GmhA subfamily. Homotetramer. Zn(2+) is required as a cofactor.

The protein resides in the cytoplasm. It carries out the reaction 2 D-sedoheptulose 7-phosphate = D-glycero-alpha-D-manno-heptose 7-phosphate + D-glycero-beta-D-manno-heptose 7-phosphate. Its pathway is carbohydrate biosynthesis; D-glycero-D-manno-heptose 7-phosphate biosynthesis; D-glycero-alpha-D-manno-heptose 7-phosphate and D-glycero-beta-D-manno-heptose 7-phosphate from sedoheptulose 7-phosphate: step 1/1. Its function is as follows. Catalyzes the isomerization of sedoheptulose 7-phosphate in D-glycero-D-manno-heptose 7-phosphate. The chain is Phosphoheptose isomerase from Desulfovibrio desulfuricans (strain ATCC 27774 / DSM 6949 / MB).